Here is a 1358-residue protein sequence, read N- to C-terminus: Regulatory protein SIR4 (1358 aa).

A compositionally biased stretch (polar residues) spans 1–15 (MPNDNKTPNRSSTPK). Disordered regions lie at residues 1 to 98 (MPND…PHSN), 252 to 277 (SLSV…SPGI), 356 to 466 (HDEK…PPEI), 498 to 544 (VQGE…ISNG), 677 to 726 (ASTE…EDEQ), 752 to 787 (VSDS…DLDT), and 913 to 970 (HSQE…ENLS). Positions 26 to 39 (KIPEREEKSNEVKT) are enriched in basic and acidic residues. Composition is skewed to polar residues over residues 49 to 66 (KSKN…SPHQ) and 75 to 96 (HKQL…SFPH). A compositionally biased stretch (basic and acidic residues) spans 373-388 (QKMKEDADLKRMEILK). The span at 428–437 (QENNYNSTSR) shows a compositional bias: polar residues. The segment covering 452–464 (KNGENKKIGKRPP) has biased composition (basic and acidic residues). Over residues 507–517 (RNNTLNVTPSK) the composition is skewed to polar residues. S692 bears the Phosphoserine mark. Positions 706–720 (FPVSLSQPSKKSFAN) are enriched in polar residues. Residues 754 to 766 (DSDDSSSDNDSLT) are compositionally biased toward acidic residues. Residues 777–787 (NEIKVTNDLDT) show a composition bias toward basic and acidic residues. Over residues 916-932 (EQNSSSAKPSQIPTVSS) the composition is skewed to polar residues. Residue K1128 forms a Glycyl lysine isopeptide (Lys-Gly) (interchain with G-Cter in SUMO) linkage. The stretch at 1271 to 1347 (LSFVDIVLSK…DAKINKLMEK (77 aa)) forms a coiled coil.

In terms of assembly, homodimer. Interacts with MPS3. Interacts with RIS1. Interacts with SIR1, SIR2 and SIR3. Interacts with YKU80. Interacts with UBP10. Interacts with RAP1 (via C-terminus).

Its subcellular location is the nucleus. Functionally, the proteins SIR1 through SIR4 are required for transcriptional repression of the silent mating type loci, HML and HMR. The proteins SIR2 through SIR4 repress mulitple loci by modulating chromatin structure. Involves the compaction of chromatin fiber into a more condensed form. The chain is Regulatory protein SIR4 (SIR4) from Saccharomyces cerevisiae (strain ATCC 204508 / S288c) (Baker's yeast).